The following is a 228-amino-acid chain: Lipoprotein-releasing system ATP-binding protein LolD (228 aa).

The 224-residue stretch at 5–228 (LRCHQVCKTY…DGLLTDITGA (224 aa)) folds into the ABC transporter domain. An ATP-binding site is contributed by 41 to 48 (GSSGSGKS).

This sequence belongs to the ABC transporter superfamily. Lipoprotein translocase (TC 3.A.1.125) family. In terms of assembly, the complex is composed of two ATP-binding proteins (LolD) and two transmembrane proteins (LolC and LolE).

The protein localises to the cell inner membrane. Functionally, part of the ABC transporter complex LolCDE involved in the translocation of mature outer membrane-directed lipoproteins, from the inner membrane to the periplasmic chaperone, LolA. Responsible for the formation of the LolA-lipoprotein complex in an ATP-dependent manner. This chain is Lipoprotein-releasing system ATP-binding protein LolD, found in Vibrio cholerae serotype O1 (strain ATCC 39315 / El Tor Inaba N16961).